Reading from the N-terminus, the 125-residue chain is Translation initiation factor 5A (125 aa).

Residue lysine 35 is modified to Hypusine.

Belongs to the eIF-5A family.

It localises to the cytoplasm. Its function is as follows. Functions by promoting the formation of the first peptide bond. In Methanoculleus marisnigri (strain ATCC 35101 / DSM 1498 / JR1), this protein is Translation initiation factor 5A (eIF5A).